The chain runs to 207 residues: Recombination protein RecR (207 aa).

Residues 60-75 form a C4-type zinc finger; the sequence is CRHCHNISDSDVCTIC. The Toprim domain occupies 83–178; the sequence is STLCVVENIR…RVSVIARGIA (96 aa).

It belongs to the RecR family.

In terms of biological role, may play a role in DNA repair. It seems to be involved in an RecBC-independent recombinational process of DNA repair. It may act with RecF and RecO. The polypeptide is Recombination protein RecR (Porphyromonas gingivalis (strain ATCC BAA-308 / W83)).